A 422-amino-acid chain; its full sequence is Vitamin D3 receptor B (422 aa).

Residues 20–95 (PRICGVCGDK…IGMMKEFILT (76 aa)) constitute a DNA-binding region (nuclear receptor). Cys-23, Cys-26, Cys-40, Cys-43, Cys-59, Cys-65, Cys-75, and Cys-78 together coordinate Zn(2+). 2 NR C4-type zinc fingers span residues 23–43 (CGVC…CEGC) and 59–78 (CPFN…CQAC). The hinge stretch occupies residues 96-125 (DEEVQRKKELIQRRKDEEAHREAQKPRLSD). The interval 106-128 (IQRRKDEEAHREAQKPRLSDEQR) is disordered. Residues 126–418 (EQRNIIDTLV…LTPLVLEVFG (293 aa)) enclose the NR LBD domain. Tyr-142 serves as a coordination point for calcitriol. Positions 145-190 (SYSDFSRFRPPVREGPVTRSASRAASLHSLSDASSDSFSHSPESGD) are disordered. Residues 163-185 (RSASRAASLHSLSDASSDSFSHS) show a composition bias toward low complexity. Ser-234 provides a ligand contact to calcitriol. Residues 243–261 (KMIPGFRELTAEDQIALLK) form an interaction with coactivator LXXLL motif region. Arg-271, Ser-275, His-302, and His-392 together coordinate calcitriol. The 9aaTAD motif lies at 411–419 (PLVLEVFGG).

It belongs to the nuclear hormone receptor family. In terms of assembly, homodimer in the absence of bound vitamin D3. Heterodimer with RXRA after vitamin D3 binding. Interacts with ncoa1 and possibly other coactivators, leading to a strong increase of transcription of target genes. Detected in embryo 24 to 48 hours after fertilization, and in intestinal bulb.

Its subcellular location is the nucleus. It is found in the cytoplasm. Its function is as follows. Nuclear receptor for calcitriol, the active form of vitamin D3 which mediates the action of this vitamin on cells. Enters the nucleus upon vitamin D3 binding where it forms heterodimers with the retinoid X receptor/RXR. The VDR-RXR heterodimers bind to specific response elements on DNA and activate the transcription of vitamin D3-responsive target genes. Recruited to promoters via its interaction with BAZ1B/WSTF which mediates the interaction with acetylated histones, an essential step for VDR-promoter association. Plays a central role in calcium homeostasis. This chain is Vitamin D3 receptor B (vdrb), found in Danio rerio (Zebrafish).